The following is a 268-amino-acid chain: Movement protein (268 aa).

The interval Gly-215–Phe-243 is disordered. Positions Asn-225–Tyr-237 are enriched in polar residues.

It belongs to the tobamovirus movement protein family. Binds to host RBCS at the plasmodesmata; this interaction seems required for viral systemic movement. In resistant plants, interacts with host MBP2C at host microtubules; this interaction prevents virus cell to cell movement. In resistant plants, interacts with host resistance (R) protein (e.g. tomato ToMV resistance protein TM-2(2), AC Q71BG9) at the host plasma membrane; this interaction triggers host defense responses leading to programmed cell death.

It localises to the host cytoplasm. Its subcellular location is the host cytoskeleton. It is found in the host cell junction. The protein resides in the host plasmodesma. Transports viral genome to neighboring plant cells directly through plasmosdesmata, without any budding. The movement protein allows efficient cell to cell propagation, by bypassing the host cell wall barrier. Forms a ribonucleoprotein complex with viral RNA. Binds microtubules and modulates microtubule stability. Can bind double-stranded DNA. Triggers host hypersensitive defense reaction in incompatible plants harboring resistance (R) proteins. This Nicotiana tabacum (Common tobacco) protein is Movement protein (MP).